The chain runs to 134 residues: Large-conductance mechanosensitive channel (134 aa).

The next 2 helical transmembrane spans lie at 16–36 (VVDMAVGIIIGVAFGKIVSSF) and 76–96 (GVFLQAIFDFIIIAFAIFIAV).

The protein belongs to the MscL family. Homopentamer.

Its subcellular location is the cell inner membrane. Channel that opens in response to stretch forces in the membrane lipid bilayer. May participate in the regulation of osmotic pressure changes within the cell. The polypeptide is Large-conductance mechanosensitive channel (Thioalkalivibrio sulfidiphilus (strain HL-EbGR7)).